Here is a 93-residue protein sequence, read N- to C-terminus: UPF0223 protein str0998 (93 aa).

Belongs to the UPF0223 family.

This chain is UPF0223 protein str0998, found in Streptococcus thermophilus (strain CNRZ 1066).